A 782-amino-acid polypeptide reads, in one-letter code: LPS-assembly protein LptD (782 aa).

The signal sequence occupies residues 1–23 (MNKKHTLISLAILTALYSQQSLA).

It belongs to the LptD family. Component of the lipopolysaccharide transport and assembly complex. Interacts with LptE and LptA.

It localises to the cell outer membrane. Its function is as follows. Together with LptE, is involved in the assembly of lipopolysaccharide (LPS) at the surface of the outer membrane. The sequence is that of LPS-assembly protein LptD from Haemophilus influenzae (strain 86-028NP).